Consider the following 733-residue polypeptide: Photosystem I P700 chlorophyll a apoprotein A2 (733 aa).

Helical transmembrane passes span 46–69, 134–157, 174–198, 272–290, 329–352, 368–394, 416–438, and 516–534; these read IFAS…FHVA, LYLG…LHLQ, LNHH…HVAL, IAHH…GHMY, LHIQ…QHMY, AALY…IFFV, AIIS…LYIH, and FLVH…LILV. Positions 558 and 567 each coordinate [4Fe-4S] cluster. The next 2 membrane-spanning stretches (helical) occupy residues 574 to 595 and 642 to 664; these read AFYL…YWHW and LSVW…MFLI. Residues His-653, Met-661, and Tyr-669 each coordinate chlorophyll a. Position 670 (Trp-670) interacts with phylloquinone. Residues 706-726 traverse the membrane as a helical segment; it reads LVGLVHFAVGYILTYAAFVIA.

It belongs to the PsaA/PsaB family. The PsaA/B heterodimer binds the P700 chlorophyll special pair and subsequent electron acceptors. PSI consists of a core antenna complex that captures photons, and an electron transfer chain that converts photonic excitation into a charge separation. The eukaryotic PSI reaction center is composed of at least 11 subunits. P700 is a chlorophyll a/chlorophyll a' dimer, A0 is one or more chlorophyll a, A1 is one or both phylloquinones and FX is a shared 4Fe-4S iron-sulfur center. serves as cofactor.

The protein localises to the plastid. It is found in the chloroplast thylakoid membrane. The enzyme catalyses reduced [plastocyanin] + hnu + oxidized [2Fe-2S]-[ferredoxin] = oxidized [plastocyanin] + reduced [2Fe-2S]-[ferredoxin]. PsaA and PsaB bind P700, the primary electron donor of photosystem I (PSI), as well as the electron acceptors A0, A1 and FX. PSI is a plastocyanin/cytochrome c6-ferredoxin oxidoreductase, converting photonic excitation into a charge separation, which transfers an electron from the donor P700 chlorophyll pair to the spectroscopically characterized acceptors A0, A1, FX, FA and FB in turn. Oxidized P700 is reduced on the lumenal side of the thylakoid membrane by plastocyanin or cytochrome c6. The polypeptide is Photosystem I P700 chlorophyll a apoprotein A2 (Trieres chinensis (Marine centric diatom)).